Reading from the N-terminus, the 424-residue chain is Enolase (424 aa).

Gln-162 lines the (2R)-2-phosphoglycerate pocket. Glu-204 serves as the catalytic Proton donor. Positions 241, 284, and 311 each coordinate Mg(2+). The (2R)-2-phosphoglycerate site is built by Lys-336, Arg-365, Ser-366, and Lys-387. Residue Lys-336 is the Proton acceptor of the active site.

The protein belongs to the enolase family. It depends on Mg(2+) as a cofactor.

The protein localises to the cytoplasm. The protein resides in the secreted. It localises to the cell surface. The enzyme catalyses (2R)-2-phosphoglycerate = phosphoenolpyruvate + H2O. Its pathway is carbohydrate degradation; glycolysis; pyruvate from D-glyceraldehyde 3-phosphate: step 4/5. Catalyzes the reversible conversion of 2-phosphoglycerate (2-PG) into phosphoenolpyruvate (PEP). It is essential for the degradation of carbohydrates via glycolysis. The chain is Enolase from Rhizobium johnstonii (strain DSM 114642 / LMG 32736 / 3841) (Rhizobium leguminosarum bv. viciae).